A 926-amino-acid polypeptide reads, in one-letter code: Sperm-associated antigen 1 (926 aa).

TPR repeat units lie at residues 209-242 (ATRE…LPTV), 244-275 (AYNN…EPGN), and 276-309 (VKAL…EPDN). The interval 318–452 (EVERDLKNSE…ENPAGLKSQG (135 aa)) is disordered. Phosphoserine occurs at positions 347 and 354. The segment covering 352-368 (GKSGRKHEDGGGDKKPA) has biased composition (basic and acidic residues). The span at 369–379 (EPAGAARAAQP) shows a compositional bias: low complexity. S423 bears the Phosphoserine mark. Residues 428 to 441 (AGGGATGHPGGGQG) are compositionally biased toward gly residues. TPR repeat units lie at residues 445–478 (PAGL…LEPA), 487–520 (SILY…HPFS), 522–554 (KPLL…DCGL), 623–656 (FKAL…NNKE), 657–690 (CAIY…ADGN), and 692–724 (KAFY…DPSI). Basic and acidic residues-rich tracts occupy residues 758–769 (IQEVNEGKEEPG) and 784–799 (KGGK…EKLP). A disordered region spans residues 758–801 (IQEVNEGKEEPGRPAGEVSMGCLASEKGGKSSRSPEDPEKLPIA). 781-788 (ASEKGGKS) contributes to the GTP binding site. S791 bears the Phosphoserine mark.

Present in most tissues, including lung, with the strongest expression in brain, colon, kidney, and testis. In sperm and testis, detected in particular in pachytene primary spermatocytes. Up-regulated in pancreatic tumor tissues and not in normal pancreatic tissue.

It localises to the cytoplasm. It is found in the dynein axonemal particle. Its function is as follows. May play a role in the cytoplasmic assembly of the ciliary dynein arms. May play a role in fertilization. Binds GTP and has GTPase activity. The sequence is that of Sperm-associated antigen 1 (SPAG1) from Homo sapiens (Human).